A 102-amino-acid polypeptide reads, in one-letter code: Small ribosomal subunit protein uS10 (102 aa).

The protein belongs to the universal ribosomal protein uS10 family. Part of the 30S ribosomal subunit.

Functionally, involved in the binding of tRNA to the ribosomes. This Streptococcus uberis (strain ATCC BAA-854 / 0140J) protein is Small ribosomal subunit protein uS10.